The sequence spans 340 residues: MNPFHASCWNTSAELLNKSWNKEFAYQTASVVDTVILPSMIGIICSTGLVGNILIVFTIIRSRKKTVPDIYICNLAVADLVHIVGMPFLIHQWARGGEWVFGGPLCTIITSLDTCNQFACSAIMTVMSVDRYFALVQPFRLTRWRTRYKTIRINLGLWAASFILALPVWVYSKVIKFKDGVESCAFDLTSPDDVLWYTLYLTITTFFFPLPLILVCYILILCYTWEMYQQNKDARCCNPSVPKQRVMKLTKMVLVLVVVFILSAAPYHVIQLVNLQMEQPTLAFYVGYYLSICLSYASSSINPFLYILLSGNFQKRLPQIQRRATEKEINNMGNTLKSHF.

Residues 1–39 lie on the Extracellular side of the membrane; sequence MNPFHASCWNTSAELLNKSWNKEFAYQTASVVDTVILPS. Asn-10 and Asn-17 each carry an N-linked (GlcNAc...) asparagine glycan. A helical transmembrane segment spans residues 40 to 60; sequence MIGIICSTGLVGNILIVFTII. At 61-69 the chain is on the cytoplasmic side; the sequence is RSRKKTVPD. A helical membrane pass occupies residues 70–90; it reads IYICNLAVADLVHIVGMPFLI. Topologically, residues 91–104 are extracellular; it reads HQWARGGEWVFGGP. Residues 105-129 traverse the membrane as a helical segment; it reads LCTIITSLDTCNQFACSAIMTVMSV. Over 130–154 the chain is Cytoplasmic; that stretch reads DRYFALVQPFRLTRWRTRYKTIRIN. Residues 155 to 175 form a helical membrane-spanning segment; the sequence is LGLWAASFILALPVWVYSKVI. At 176-200 the chain is on the extracellular side; the sequence is KFKDGVESCAFDLTSPDDVLWYTLY. Residues 201 to 221 traverse the membrane as a helical segment; sequence LTITTFFFPLPLILVCYILIL. Topologically, residues 222–252 are cytoplasmic; the sequence is CYTWEMYQQNKDARCCNPSVPKQRVMKLTKM. The helical transmembrane segment at 253–273 threads the bilayer; it reads VLVLVVVFILSAAPYHVIQLV. The Extracellular portion of the chain corresponds to 274-288; that stretch reads NLQMEQPTLAFYVGY. The chain crosses the membrane as a helical span at residues 289 to 309; that stretch reads YLSICLSYASSSINPFLYILL. Residues 310 to 340 are Cytoplasmic-facing; sequence SGNFQKRLPQIQRRATEKEINNMGNTLKSHF.

This sequence belongs to the G-protein coupled receptor 1 family. In terms of tissue distribution, specifically expressed in the brain, with highest levels in cerebral cortex, hippocampus and amygdala. No expression detected in the cerebellum, thalamus or hypothalamus.

Its subcellular location is the cell membrane. Functionally, receptor for melanin-concentrating hormone, coupled to G proteins that activate phosphoinositide hydrolysis. The chain is Melanin-concentrating hormone receptor 2 (MCHR2) from Homo sapiens (Human).